Reading from the N-terminus, the 578-residue chain is MKNSFLINILIIYYLFIILFVNSQDLKLGGSCELIDSNSPCFSKLNYTNFYLQPGDSITQLNKNVSDIIRMLEFTTPECKPNAINIMCLKSYPKCETYNETLSNNTNIIFNLPSLPCNSICLKAETPCKIFIDNFIKDLSCNSNFSNGAPMFPINSTDYEFKESGNFNFNVECNDNIIYDNSSSVINCPAPLLNSKDHVIPGKTTYYYITDSCILDCPFEIYPGKTKILDRTNYTLTSISFITCIFMILTFGVLPNKITHRMESILSFACGGCITALSLFIQSRQDNFNCSSDPGRFKSQSDYLCLLTGLIFQFGAITSIFWSPMIAYDFYITSTLGKIRKFGLYRIVLWSFIFVLTALPAFGGKYSATVATNCWINSDDGSAWQYVSFYIPSWCAMGLICLFSILSVINVSKMYIQTPNNRILFFNIKILITLLLFLFVLTFASSLKFYMEERMDTYFDAIAVWVECIGKGDPSQCELHAPGYDLKALNIVVIGILGFTVFIGYGLDPIVIHIWMESKKFQWVLKKCRLDKIIKLNNSINNSNNNNNETASTSSGNERKQTTVKMSNLKSTEINQQP.

The first 23 residues, 1 to 23 (MKNSFLINILIIYYLFIILFVNS), serve as a signal peptide directing secretion. The Extracellular segment spans residues 24–233 (QDLKLGGSCE…GKTKILDRTN (210 aa)). In terms of domain architecture, FZ spans 27-157 (KLGGSCELID…GAPMFPINST (131 aa)). 4 disulfides stabilise this stretch: cysteine 32–cysteine 95, cysteine 41–cysteine 88, cysteine 79–cysteine 128, and cysteine 121–cysteine 141. N-linked (GlcNAc...) asparagine glycans are attached at residues asparagine 46, asparagine 64, asparagine 99, and asparagine 104. Residues asparagine 144, asparagine 155, asparagine 181, and asparagine 233 are each glycosylated (N-linked (GlcNAc...) asparagine). The helical transmembrane segment at 234-254 (YTLTSISFITCIFMILTFGVL) threads the bilayer. Residues 255 to 261 (PNKITHR) are Cytoplasmic-facing. A helical membrane pass occupies residues 262–282 (MESILSFACGGCITALSLFIQ). Over 283 to 305 (SRQDNFNCSSDPGRFKSQSDYLC) the chain is Extracellular. An N-linked (GlcNAc...) asparagine glycan is attached at asparagine 289. The helical transmembrane segment at 306–326 (LLTGLIFQFGAITSIFWSPMI) threads the bilayer. Residues 327–341 (AYDFYITSTLGKIRK) are Cytoplasmic-facing. A helical transmembrane segment spans residues 342-362 (FGLYRIVLWSFIFVLTALPAF). At 363 to 388 (GGKYSATVATNCWINSDDGSAWQYVS) the chain is on the extracellular side. A helical transmembrane segment spans residues 389-409 (FYIPSWCAMGLICLFSILSVI). The Cytoplasmic portion of the chain corresponds to 410-422 (NVSKMYIQTPNNR). Residues 423–443 (ILFFNIKILITLLLFLFVLTF) form a helical membrane-spanning segment. Residues 444–490 (ASSLKFYMEERMDTYFDAIAVWVECIGKGDPSQCELHAPGYDLKALN) lie on the Extracellular side of the membrane. The chain crosses the membrane as a helical span at residues 491–511 (IVVIGILGFTVFIGYGLDPIV). At 512–578 (IHIWMESKKF…LKSTEINQQP (67 aa)) the chain is on the cytoplasmic side. Positions 544-556 (NNNNNETASTSSG) are enriched in low complexity. Residues 544–578 (NNNNNETASTSSGNERKQTTVKMSNLKSTEINQQP) are disordered. Polar residues predominate over residues 563–578 (TVKMSNLKSTEINQQP).

It belongs to the G-protein coupled receptor Fz/Smo family.

The protein localises to the membrane. The protein is Frizzled and smoothened-like protein Q (fslQ) of Dictyostelium discoideum (Social amoeba).